Consider the following 733-residue polypeptide: Acyl-coenzyme A oxidase (733 aa).

This sequence belongs to the acyl-CoA oxidase family. FAD is required as a cofactor.

It is found in the peroxisome. The enzyme catalyses a 2,3-saturated acyl-CoA + O2 = a (2E)-enoyl-CoA + H2O2. The protein operates within lipid metabolism; peroxisomal fatty acid beta-oxidation. The protein is Acyl-coenzyme A oxidase (POX1) of Eremothecium gossypii (strain ATCC 10895 / CBS 109.51 / FGSC 9923 / NRRL Y-1056) (Yeast).